The sequence spans 390 residues: MSKQLGQKIAPTPISNDINVVDLIDQYFTAYNSARLREICQLLSRDVLTEGVTVGVSLSGAMTPAGFGVSALAPLIRNGFIDWMISTGANLYHDMHYGLGFELFAGNPFLDDVKLRQEGTIRIYDIIFGYDVLLETDAFIRKILQGEAFQKRMGTAEFHYLLGKYVREVEKQLGVQHSCLLATAYEYGVPIYTSSPGDSSIGMNVAALALEGSQLVLDPSIDVNETAAIAYNARESGGKSAAVILGGGSPKNFLLQTQPQLHEVLGLEERGHDYFVQFTDARPDTGGLSGATPSEAVSWGKIDPEELPNTIVCYTDSTIALPLVTAYVLNKCQPRPLKRIYDKREAILDKLQKDYLAAKTQPSDQVPAAVAESAQKQTATYPCGRLIPNT.

It belongs to the deoxyhypusine synthase family.

This chain is Deoxyhypusine synthase-like protein, found in Nostoc punctiforme (strain ATCC 29133 / PCC 73102).